The sequence spans 292 residues: T-box transcription factor tbx-9 (292 aa).

A DNA-binding region (T-box) is located at residues 10 to 194 (GSQETLWKIF…HNSFAKGFRD (185 aa)). Disordered stretches follow at residues 192-227 (FRDG…EVAP) and 265-292 (STPS…DIVG). 2 stretches are compositionally biased toward low complexity: residues 204–223 (PSYS…RSPP) and 265–275 (STPSSSSSELS). A compositionally biased stretch (acidic residues) spans 280 to 292 (EDQEVEEDIDIVG).

It is found in the nucleus. Its function is as follows. Transcription factor. Involved in the control of early morphogenesis of the intestine, hypodermis and body-wall muscle. Involved in regulating expression of vab-7. Appears to have partially redundant function to tbx-8. Positively modulates expression of homeobox protein lin-39, perhaps by binding to regulatory regions of the lin-39 gene, acting in the vulval lineage. The polypeptide is T-box transcription factor tbx-9 (tbx-9) (Caenorhabditis elegans).